Consider the following 156-residue polypeptide: UPF0251 protein Sfum_2819 (156 aa).

It belongs to the UPF0251 family.

This chain is UPF0251 protein Sfum_2819, found in Syntrophobacter fumaroxidans (strain DSM 10017 / MPOB).